We begin with the raw amino-acid sequence, 226 residues long: LIM domain-containing protein PLIM2a (226 aa).

2 consecutive LIM zinc-binding domains span residues 8-68 and 104-164; these read DKCK…LFKE and DKCA…LFLE. A disordered region spans residues 173-226; it reads QAAANHRRSASSGGASPPSDDHKPDDTASIPEAKEDDAAPEAAGEEEPEPVVES. A compositionally biased stretch (basic and acidic residues) spans 191–209; it reads SDDHKPDDTASIPEAKEDD. A compositionally biased stretch (acidic residues) spans 210 to 226; it reads AAPEAAGEEEPEPVVES.

As to quaternary structure, interacts with F-actin. As to expression, predominantly expressed in flowers, in the tapetum and in pollen grains. Detected in leaves and stems.

Its subcellular location is the cytoplasm. The protein resides in the cytoskeleton. Its function is as follows. Binds to actin filaments and promotes cross-linking into thick bundles. Has an actin-stabilizing activity. The actin regulatory activities are inhibited by pH &gt; 6.8 but are [Ca(2+)] independent. This is LIM domain-containing protein PLIM2a from Arabidopsis thaliana (Mouse-ear cress).